Here is a 178-residue protein sequence, read N- to C-terminus: Probable chorismate pyruvate-lyase (178 aa).

Substrate is bound by residues M37, R78, L114, and E165.

This sequence belongs to the UbiC family.

It localises to the cytoplasm. It carries out the reaction chorismate = 4-hydroxybenzoate + pyruvate. It functions in the pathway cofactor biosynthesis; ubiquinone biosynthesis. Removes the pyruvyl group from chorismate, with concomitant aromatization of the ring, to provide 4-hydroxybenzoate (4HB) for the ubiquinone pathway. This is Probable chorismate pyruvate-lyase from Aeromonas hydrophila subsp. hydrophila (strain ATCC 7966 / DSM 30187 / BCRC 13018 / CCUG 14551 / JCM 1027 / KCTC 2358 / NCIMB 9240 / NCTC 8049).